A 439-amino-acid polypeptide reads, in one-letter code: High-energy light unresponsive protein 1 (439 aa).

At 1 to 67 the chain is on the cytoplasmic side; it reads MPPPSSHSNI…LGLNQSIRPN (67 aa). Residues 68 to 88 form a helical membrane-spanning segment; it reads NSLLFRIYSWLVFCLLLFTTL. Over 89–114 the chain is Extracellular; it reads RKFNQVGVRPNGTRENLQEFFANPRS. The chain crosses the membrane as a helical span at residues 115–135; the sequence is MITLCNALIMLSGLLASLQLY. Residues 136-164 are Cytoplasmic-facing; sequence TLGAKRLKPLKILCQFSLNVRTKQAERRQ. Residues 165-185 form a helical membrane-spanning segment; that stretch reads FMINTFLAVFSGLLALTMAAT. At 186 to 211 the chain is on the extracellular side; sequence YAMSKWGYILYIVGTPNLDTETIFCV. The chain crosses the membrane as a helical span at residues 212 to 232; the sequence is LLDSYALFVSRAAISALAILF. Residues 233–290 lie on the Cytoplasmic side of the membrane; sequence YQHCSVIRRSIKHLINEMVPAEQDECPLPESSLQKIHDCQISYQRIFNGKAVIEEYYS. Residues 291–311 traverse the membrane as a helical segment; the sequence is FVLFYSYGVCIPIFCFLMFVG. Topologically, residues 312–324 are extracellular; sequence MSAQSICWSEVVS. A helical transmembrane segment spans residues 325 to 345; that stretch reads IVIWIVNAILVLLLFSLPAFM. Residues 346–402 are Cytoplasmic-facing; it reads INEDGDRLVASSFRMYHETFHEERDLTVLSQMTFFTFQIHSTKLTLSACNYFYMDRS. The chain crosses the membrane as a helical span at residues 403 to 423; it reads ILLSLFSAILTYFLILWEFDI. Residues 424-439 are Extracellular-facing; sequence KNNQSLQNIANHTIHT.

It belongs to the insect chemoreceptor superfamily. Gustatory receptor (GR) family. In terms of tissue distribution, expressed in the AVG and PVT neurons of the tail.

It is found in the cell membrane. In terms of biological role, photoreceptor for short wavelength (UV) light that mediates UV-light-induced avoidance behavior. Directly senses and absorbs both UV-A and UV-B light with very high efficiency. Absorption of UV-B but not UV-A light shows resistance to photobleaching. In contrast to other photoreceptors, does not use a prosthetic chromophore to capture photons and only depends on its protein conformation. Might have a role in response to white light exposure. The sequence is that of High-energy light unresponsive protein 1 from Caenorhabditis elegans.